The primary structure comprises 591 residues: Speriolin (591 aa).

Residues 1 to 42 (MSLLTNYEGLRHQIERLVRENEELKKLVRLIRENHELKSAIK) are a coiled coil. The necessary for targeting centrosomes stretch occupies residues 1 to 78 (MSLLTNYEGL…NNGVFLPPSP (78 aa)). Positions 302–314 (NTSDTQAQPSAAQ) are enriched in polar residues. 2 disordered regions span residues 302–331 (NTSD…TSPT) and 346–435 (ATSY…ENPR). The span at 317–331 (VVPASVPTSPTTSPT) shows a compositional bias: low complexity. 2 stretches are compositionally biased toward polar residues: residues 346 to 357 (ATSYTPSSTTHI) and 390 to 401 (PRTSSSPASVND).

The protein belongs to the speriolin family. In terms of assembly, found in a complex with CDC20, CDC27 and TUBG1. Interacts with CDC20. As to expression, detected only in testis.

The protein localises to the cytoplasm. The protein resides in the cytoskeleton. Its subcellular location is the microtubule organizing center. It localises to the centrosome. This is Speriolin (SPATC1) from Homo sapiens (Human).